Here is a 357-residue protein sequence, read N- to C-terminus: Cinnamyl alcohol dehydrogenase 1 (357 aa).

Residue C47 participates in Zn(2+) binding. Residue T49 coordinates NADP(+). Residues H69, E70, C100, C103, C106, C114, and C163 each coordinate Zn(2+). NADP(+) contacts are provided by residues T167, 188–193 (GLGGVG), 211–216 (SSSDKK), T251, G275, and 298–300 (SFI).

It belongs to the zinc-containing alcohol dehydrogenase family. Homodimer. Requires Zn(2+) as cofactor. As to expression, expressed in leaves, mainly in peltate glands.

The catalysed reaction is (E)-cinnamyl alcohol + NADP(+) = (E)-cinnamaldehyde + NADPH + H(+). It catalyses the reaction (E)-coniferol + NADP(+) = (E)-coniferaldehyde + NADPH + H(+). It carries out the reaction (E)-sinapyl alcohol + NADP(+) = (E)-sinapaldehyde + NADPH + H(+). The enzyme catalyses (E)-4-coumaroyl alcohol + NADP(+) = (E)-4-coumaraldehyde + NADPH + H(+). The catalysed reaction is (E)-caffeyl alcohol + NADP(+) = (E)-caffeyl aldehyde + NADPH + H(+). It functions in the pathway aromatic compound metabolism; phenylpropanoid biosynthesis. 60% inhibition by 5 mM Ca(+), Mg(+) or Cu(+). Functionally, involved in the production of citral, a mixture of geranial and neral with a strong lemony scent. Reversibly oxidizes geraniol to produce geranial at half the efficiency compared with its activity with cinnamyl alcohol. Does not use nerol and neral as substrates. This Ocimum basilicum (Sweet basil) protein is Cinnamyl alcohol dehydrogenase 1 (CAD1).